Here is a 293-residue protein sequence, read N- to C-terminus: Protein BOBBER 2 (293 aa).

Ala-2 carries the N-acetylalanine modification. A coiled-coil region spans residues 50–80; the sequence is EKEIVAAVMAAKQRLREAEKKKLEKESVKSM. 2 stretches are compositionally biased toward basic and acidic residues: residues 67–102 and 110–120; these read AEKK…KEES and EIEKPKEEKES. The disordered stretch occupies residues 67–125; it reads AEKKKLEKESVKSMEVEKPKKDSLKPTELEKPKEESLMATDPMEIEKPKEEKESGPIVP. One can recognise a CS domain in the interval 131-220; sequence LDFEKYSWGQ…DQMEWWKYCV (90 aa).

It is found in the cytoplasm. It localises to the cytoplasmic granule. Small heat shock protein required for the establishment of auxin gradients and for patterning of the apical domain of the embryo. Involved in the specification of the cotyledon primordia. Also required for normal inflorescence and floral meristem function, normal developmental patterning and thermotolerance. Acts as a molecular chaperone. This chain is Protein BOBBER 2 (BOB2), found in Arabidopsis thaliana (Mouse-ear cress).